Consider the following 91-residue polypeptide: ATP-dependent Clp protease adapter protein ClpS (91 aa).

This sequence belongs to the ClpS family. In terms of assembly, binds to the N-terminal domain of the chaperone ClpA.

Involved in the modulation of the specificity of the ClpAP-mediated ATP-dependent protein degradation. The sequence is that of ATP-dependent Clp protease adapter protein ClpS from Helicobacter pylori (strain ATCC 700392 / 26695) (Campylobacter pylori).